The following is an 87-amino-acid chain: U3-theraphotoxin-Hhn1a 17 (87 aa).

The signal sequence occupies residues methionine 1–alanine 24. Residues serine 25–arginine 52 constitute a propeptide that is removed on maturation. 3 cysteine pairs are disulfide-bonded: cysteine 54-cysteine 67, cysteine 61-cysteine 72, and cysteine 66-cysteine 79.

Belongs to the neurotoxin 10 (Hwtx-1) family. 51 (Hntx-8) subfamily. Hntx-8 sub-subfamily. Expressed by the venom gland.

The protein localises to the secreted. Ion channel inhibitor. The polypeptide is U3-theraphotoxin-Hhn1a 17 (Cyriopagopus hainanus (Chinese bird spider)).